The following is a 684-amino-acid chain: UvrABC system protein B (684 aa).

A Helicase ATP-binding domain is found at 30 to 188; that stretch reads EGVQRGDRWQ…QELVSLHYVR (159 aa). Residue 43–50 coordinates ATP; the sequence is GVTGSGKT. Residues 96 to 119 carry the Beta-hairpin motif; the sequence is YYDFYQPEAYLPALDKYIAKDLRI. Positions 435-601 constitute a Helicase C-terminal domain; the sequence is QIDDLLGEIR…SIIKSVEQVL (167 aa). A UVR domain is found at 641–676; sequence YSMAESLRLEMQEAALKMEYEKAAYLRDEITKFEHR.

It belongs to the UvrB family. Forms a heterotetramer with UvrA during the search for lesions. Interacts with UvrC in an incision complex.

It is found in the cytoplasm. Its function is as follows. The UvrABC repair system catalyzes the recognition and processing of DNA lesions. A damage recognition complex composed of 2 UvrA and 2 UvrB subunits scans DNA for abnormalities. Upon binding of the UvrA(2)B(2) complex to a putative damaged site, the DNA wraps around one UvrB monomer. DNA wrap is dependent on ATP binding by UvrB and probably causes local melting of the DNA helix, facilitating insertion of UvrB beta-hairpin between the DNA strands. Then UvrB probes one DNA strand for the presence of a lesion. If a lesion is found the UvrA subunits dissociate and the UvrB-DNA preincision complex is formed. This complex is subsequently bound by UvrC and the second UvrB is released. If no lesion is found, the DNA wraps around the other UvrB subunit that will check the other stand for damage. In Chlorobium limicola (strain DSM 245 / NBRC 103803 / 6330), this protein is UvrABC system protein B.